Reading from the N-terminus, the 444-residue chain is Phosphoglucosamine mutase (444 aa).

The Phosphoserine intermediate role is filled by Ser102. The Mg(2+) site is built by Ser102, Asp241, Asp243, and Asp245. The residue at position 102 (Ser102) is a Phosphoserine.

It belongs to the phosphohexose mutase family. Mg(2+) is required as a cofactor. In terms of processing, activated by phosphorylation.

The enzyme catalyses alpha-D-glucosamine 1-phosphate = D-glucosamine 6-phosphate. Functionally, catalyzes the conversion of glucosamine-6-phosphate to glucosamine-1-phosphate. This is Phosphoglucosamine mutase from Actinobacillus pleuropneumoniae serotype 7 (strain AP76).